Consider the following 102-residue polypeptide: Auxin-responsive protein SAUR68 (102 aa).

Belongs to the ARG7 family.

It is found in the cell membrane. Functionally, may promote auxin-stimulated organ elongation, such as hypocotyls, stamen filaments and petals. The protein is Auxin-responsive protein SAUR68 of Arabidopsis thaliana (Mouse-ear cress).